Consider the following 337-residue polypeptide: Holliday junction branch migration complex subunit RuvB (337 aa).

Residues 1-179 (MTHQVSVLHQ…FSFTGRMSYY (179 aa)) are large ATPase domain (RuvB-L). Residues L18, R19, G60, K63, T64, S65, 126-128 (EDY), R169, Y179, and R216 each bind ATP. Mg(2+) is bound at residue T64. Residues 180–250 (SDEDLTTILK…VAEKALAMLL (71 aa)) form a small ATPAse domain (RuvB-S) region. The head domain (RuvB-H) stretch occupies residues 253 to 337 (DWGLNEIDIK…DNLQSLGEEK (85 aa)). Residues K308 and R313 each contribute to the DNA site.

Belongs to the RuvB family. As to quaternary structure, homohexamer. Forms an RuvA(8)-RuvB(12)-Holliday junction (HJ) complex. HJ DNA is sandwiched between 2 RuvA tetramers; dsDNA enters through RuvA and exits via RuvB. An RuvB hexamer assembles on each DNA strand where it exits the tetramer. Each RuvB hexamer is contacted by two RuvA subunits (via domain III) on 2 adjacent RuvB subunits; this complex drives branch migration. In the full resolvosome a probable DNA-RuvA(4)-RuvB(12)-RuvC(2) complex forms which resolves the HJ.

It is found in the cytoplasm. The catalysed reaction is ATP + H2O = ADP + phosphate + H(+). The RuvA-RuvB-RuvC complex processes Holliday junction (HJ) DNA during genetic recombination and DNA repair, while the RuvA-RuvB complex plays an important role in the rescue of blocked DNA replication forks via replication fork reversal (RFR). RuvA specifically binds to HJ cruciform DNA, conferring on it an open structure. The RuvB hexamer acts as an ATP-dependent pump, pulling dsDNA into and through the RuvAB complex. RuvB forms 2 homohexamers on either side of HJ DNA bound by 1 or 2 RuvA tetramers; 4 subunits per hexamer contact DNA at a time. Coordinated motions by a converter formed by DNA-disengaged RuvB subunits stimulates ATP hydrolysis and nucleotide exchange. Immobilization of the converter enables RuvB to convert the ATP-contained energy into a lever motion, pulling 2 nucleotides of DNA out of the RuvA tetramer per ATP hydrolyzed, thus driving DNA branch migration. The RuvB motors rotate together with the DNA substrate, which together with the progressing nucleotide cycle form the mechanistic basis for DNA recombination by continuous HJ branch migration. Branch migration allows RuvC to scan DNA until it finds its consensus sequence, where it cleaves and resolves cruciform DNA. In Chlamydia caviae (strain ATCC VR-813 / DSM 19441 / 03DC25 / GPIC) (Chlamydophila caviae), this protein is Holliday junction branch migration complex subunit RuvB.